The sequence spans 284 residues: MSDNADTKKRTRLNKLQKKLRRETGRAIADFNMISEGDKVMVCLSGGKDSYTMLEILRNLQHSAPVNFELVAVNMDQKQPGFPEHILPEYLEKEGVAYHILEKDTYSIVKEKVPEGKTTCGLCSRLRRGSLYGFAEEIGANKIALGHHRDDIVETLFLNMFYGGKMKAMPPKLRSDDSRNVVIRPLAYCREKDIIEFSALKEYPIIPCNLCGSQKNLQRQVIKEMLQQWDKQQPGRIENIFAAVQNIAPSQLADTRLFDFENLEQGQQQGGDQAHRLDVVNLFG.

The PP-loop motif signature appears at 45-50 (SGGKDS). Positions 120, 123, and 211 each coordinate [4Fe-4S] cluster.

This sequence belongs to the TtcA family. In terms of assembly, homodimer. It depends on Mg(2+) as a cofactor. Requires [4Fe-4S] cluster as cofactor.

The protein resides in the cytoplasm. The catalysed reaction is cytidine(32) in tRNA + S-sulfanyl-L-cysteinyl-[cysteine desulfurase] + AH2 + ATP = 2-thiocytidine(32) in tRNA + L-cysteinyl-[cysteine desulfurase] + A + AMP + diphosphate + H(+). Its pathway is tRNA modification. Catalyzes the ATP-dependent 2-thiolation of cytidine in position 32 of tRNA, to form 2-thiocytidine (s(2)C32). The sulfur atoms are provided by the cysteine/cysteine desulfurase (IscS) system. The protein is tRNA-cytidine(32) 2-sulfurtransferase of Alcanivorax borkumensis (strain ATCC 700651 / DSM 11573 / NCIMB 13689 / SK2).